The following is a 100-amino-acid chain: Nucleoid-associated protein RoseRS_1534 (100 aa).

It belongs to the YbaB/EbfC family. As to quaternary structure, homodimer.

The protein resides in the cytoplasm. Its subcellular location is the nucleoid. Its function is as follows. Binds to DNA and alters its conformation. May be involved in regulation of gene expression, nucleoid organization and DNA protection. In Roseiflexus sp. (strain RS-1), this protein is Nucleoid-associated protein RoseRS_1534.